Here is a 110-residue protein sequence, read N- to C-terminus: uncharacterized protein (110 aa).

Disordered stretches follow at residues 1 to 41 (MEWG…ERAQ) and 65 to 110 (LRQL…ASES). Residues 38–68 (ERAQQLLDAVEQRQRQLLDTIAACEEMLRQL) are a coiled coil.

This is an uncharacterized protein from Mus musculus (Mouse).